Here is a 243-residue protein sequence, read N- to C-terminus: Ubiquinone/menaquinone biosynthesis C-methyltransferase UbiE (243 aa).

S-adenosyl-L-methionine is bound by residues T69, D90, and 116-117; that span reads DA.

This sequence belongs to the class I-like SAM-binding methyltransferase superfamily. MenG/UbiE family.

The catalysed reaction is a 2-demethylmenaquinol + S-adenosyl-L-methionine = a menaquinol + S-adenosyl-L-homocysteine + H(+). It carries out the reaction a 2-methoxy-6-(all-trans-polyprenyl)benzene-1,4-diol + S-adenosyl-L-methionine = a 5-methoxy-2-methyl-3-(all-trans-polyprenyl)benzene-1,4-diol + S-adenosyl-L-homocysteine + H(+). It functions in the pathway quinol/quinone metabolism; menaquinone biosynthesis; menaquinol from 1,4-dihydroxy-2-naphthoate: step 2/2. Its pathway is cofactor biosynthesis; ubiquinone biosynthesis. Functionally, methyltransferase required for the conversion of demethylmenaquinol (DMKH2) to menaquinol (MKH2) and the conversion of 2-polyprenyl-6-methoxy-1,4-benzoquinol (DDMQH2) to 2-polyprenyl-3-methyl-6-methoxy-1,4-benzoquinol (DMQH2). The sequence is that of Ubiquinone/menaquinone biosynthesis C-methyltransferase UbiE from Paraburkholderia phymatum (strain DSM 17167 / CIP 108236 / LMG 21445 / STM815) (Burkholderia phymatum).